The primary structure comprises 563 residues: Efflux pump FUS6 (563 aa).

Positions 1–30 (MPQPDKMAAVNNAMPQPAPEKSLSSDPQPE) are disordered. The next 5 membrane-spanning stretches (helical) occupy residues 39–59 (WLIFVAIALTTFLAALDTSII), 75–95 (LYVWIIDAYLLASTATIPIFA), 105–125 (SLTLIAVCIFTLGSGLCGGAH), 138–158 (GIGGGGILTMSEIVVCDMVSI), and 167–187 (IIGGVWAIAAVVAPVMGGAFA). N-linked (GlcNAc...) asparagine glycosylation is present at Asn-189. 3 consecutive transmembrane segments (helical) span residues 194–214 (WIFYINLPIAGVSLVALGLFL), 233–253 (WGGSVLLIGSVTSIVLALSWG), and 261–281 (GWQTIVPLVIGLLALVAFFAY). N-linked (GlcNAc...) asparagine glycosylation is present at Asn-299. A run of 6 helical transmembrane segments spans residues 305 to 325 (LLVISFIHSLLLYWVCYFLPV), 340 to 360 (VMLFPIACTSAPAGVAAGITI), 368 to 388 (VWHFTGFVLMSIACGLFTLLD), 401 to 421 (ILFGVGTGTVFTSTLPPILAS), 433 to 453 (AWTFIRNFGSIWGVAIPAAVF), and 509 to 529 (KVVWQVSLAFCLLGFILCFFV). An N-linked (GlcNAc...) asparagine glycan is attached at Asn-553.

This sequence belongs to the major facilitator superfamily. TCR/Tet family.

It localises to the membrane. Efflux pump; part of the gene cluster that mediates the biosynthesis of the mycotoxin fusarin C. Within the cluster, FUS1, FUS2, FUS8 and FUS9 are sufficient for fusarin production. The other FUS cluster members are not essential for fusarin C biosynthesis. This chain is Efflux pump FUS6, found in Gibberella moniliformis (strain M3125 / FGSC 7600) (Maize ear and stalk rot fungus).